Consider the following 972-residue polypeptide: Leucine--tRNA ligase (972 aa).

A 'HIGH' region motif is present at residues 78–89 (PYPSGDGLHVGH). Positions 741-745 (KIGKS) match the 'KMSKS' region motif. ATP is bound at residue Lys-744.

It belongs to the class-I aminoacyl-tRNA synthetase family.

It localises to the cytoplasm. It carries out the reaction tRNA(Leu) + L-leucine + ATP = L-leucyl-tRNA(Leu) + AMP + diphosphate. The sequence is that of Leucine--tRNA ligase from Mycobacterium leprae (strain Br4923).